The following is a 338-amino-acid chain: Ketol-acid reductoisomerase (NADP(+)) (338 aa).

In terms of domain architecture, KARI N-terminal Rossmann spans 1–181 (MKVFYDKDCD…GGGKAGIIET (181 aa)). NADP(+)-binding positions include 24 to 27 (YGSQ), Arg47, and Ser52. The active site involves His107. Gly133 provides a ligand contact to NADP(+). Positions 182 to 327 (TFREETETDL…EKLRAMMPWI (146 aa)) constitute a KARI C-terminal knotted domain. Asp190, Glu194, Glu226, and Glu230 together coordinate Mg(2+). Residue Ser251 participates in substrate binding.

Belongs to the ketol-acid reductoisomerase family. Requires Mg(2+) as cofactor.

It carries out the reaction (2R)-2,3-dihydroxy-3-methylbutanoate + NADP(+) = (2S)-2-acetolactate + NADPH + H(+). It catalyses the reaction (2R,3R)-2,3-dihydroxy-3-methylpentanoate + NADP(+) = (S)-2-ethyl-2-hydroxy-3-oxobutanoate + NADPH + H(+). The protein operates within amino-acid biosynthesis; L-isoleucine biosynthesis; L-isoleucine from 2-oxobutanoate: step 2/4. Its pathway is amino-acid biosynthesis; L-valine biosynthesis; L-valine from pyruvate: step 2/4. Functionally, involved in the biosynthesis of branched-chain amino acids (BCAA). Catalyzes an alkyl-migration followed by a ketol-acid reduction of (S)-2-acetolactate (S2AL) to yield (R)-2,3-dihydroxy-isovalerate. In the isomerase reaction, S2AL is rearranged via a Mg-dependent methyl migration to produce 3-hydroxy-3-methyl-2-ketobutyrate (HMKB). In the reductase reaction, this 2-ketoacid undergoes a metal-dependent reduction by NADPH to yield (R)-2,3-dihydroxy-isovalerate. The chain is Ketol-acid reductoisomerase (NADP(+)) from Albidiferax ferrireducens (strain ATCC BAA-621 / DSM 15236 / T118) (Rhodoferax ferrireducens).